The sequence spans 389 residues: Phospho-N-acetylmuramoyl-pentapeptide-transferase (389 aa).

A run of 10 helical transmembrane segments spans residues 25-45, 74-94, 97-117, 134-154, 190-210, 222-242, 259-279, 286-306, 311-331, and 366-386; these read RAVM…PWVI, MGGV…CDWG, FIWV…VDDY, FFWQ…SVSE, ISYP…IVGS, GLVI…AYVM, AGEL…FLWF, VFMG…VAVI, IVLF…MAQV, and QVTV…LSTL.

It belongs to the glycosyltransferase 4 family. MraY subfamily. Mg(2+) serves as cofactor.

It is found in the cell inner membrane. The catalysed reaction is UDP-N-acetyl-alpha-D-muramoyl-L-alanyl-gamma-D-glutamyl-meso-2,6-diaminopimeloyl-D-alanyl-D-alanine + di-trans,octa-cis-undecaprenyl phosphate = di-trans,octa-cis-undecaprenyl diphospho-N-acetyl-alpha-D-muramoyl-L-alanyl-D-glutamyl-meso-2,6-diaminopimeloyl-D-alanyl-D-alanine + UMP. It functions in the pathway cell wall biogenesis; peptidoglycan biosynthesis. Functionally, catalyzes the initial step of the lipid cycle reactions in the biosynthesis of the cell wall peptidoglycan: transfers peptidoglycan precursor phospho-MurNAc-pentapeptide from UDP-MurNAc-pentapeptide onto the lipid carrier undecaprenyl phosphate, yielding undecaprenyl-pyrophosphoryl-MurNAc-pentapeptide, known as lipid I. This is Phospho-N-acetylmuramoyl-pentapeptide-transferase from Cupriavidus necator (strain ATCC 17699 / DSM 428 / KCTC 22496 / NCIMB 10442 / H16 / Stanier 337) (Ralstonia eutropha).